The chain runs to 283 residues: 4-hydroxy-tetrahydrodipicolinate synthase (283 aa).

T46 serves as a coordination point for pyruvate. Y134 acts as the Proton donor/acceptor in catalysis. K162 functions as the Schiff-base intermediate with substrate in the catalytic mechanism. Residue I208 coordinates pyruvate.

It belongs to the DapA family. In terms of assembly, homotetramer; dimer of dimers.

Its subcellular location is the cytoplasm. The catalysed reaction is L-aspartate 4-semialdehyde + pyruvate = (2S,4S)-4-hydroxy-2,3,4,5-tetrahydrodipicolinate + H2O + H(+). Its pathway is amino-acid biosynthesis; L-lysine biosynthesis via DAP pathway; (S)-tetrahydrodipicolinate from L-aspartate: step 3/4. In terms of biological role, catalyzes the condensation of (S)-aspartate-beta-semialdehyde [(S)-ASA] and pyruvate to 4-hydroxy-tetrahydrodipicolinate (HTPA). The sequence is that of 4-hydroxy-tetrahydrodipicolinate synthase from Methanothermobacter thermautotrophicus (strain ATCC 29096 / DSM 1053 / JCM 10044 / NBRC 100330 / Delta H) (Methanobacterium thermoautotrophicum).